A 395-amino-acid chain; its full sequence is ATP phosphoribosyltransferase regulatory subunit (395 aa).

This sequence belongs to the class-II aminoacyl-tRNA synthetase family. HisZ subfamily. Heteromultimer composed of HisG and HisZ subunits.

It localises to the cytoplasm. The protein operates within amino-acid biosynthesis; L-histidine biosynthesis; L-histidine from 5-phospho-alpha-D-ribose 1-diphosphate: step 1/9. Its function is as follows. Required for the first step of histidine biosynthesis. May allow the feedback regulation of ATP phosphoribosyltransferase activity by histidine. The chain is ATP phosphoribosyltransferase regulatory subunit from Pseudomonas entomophila (strain L48).